Consider the following 316-residue polypeptide: D-alanine--D-alanine ligase (316 aa).

The ATP-grasp domain maps to lysine 104–alanine 303. Proline 130–threonine 185 is a binding site for ATP. Positions 257, 270, and 272 each coordinate Mg(2+).

It belongs to the D-alanine--D-alanine ligase family. Mg(2+) is required as a cofactor. It depends on Mn(2+) as a cofactor.

It is found in the cytoplasm. The catalysed reaction is 2 D-alanine + ATP = D-alanyl-D-alanine + ADP + phosphate + H(+). It functions in the pathway cell wall biogenesis; peptidoglycan biosynthesis. Functionally, cell wall formation. This Bordetella bronchiseptica (strain ATCC BAA-588 / NCTC 13252 / RB50) (Alcaligenes bronchisepticus) protein is D-alanine--D-alanine ligase.